The following is a 236-amino-acid chain: CDP-diacylglycerol--glycerol-3-phosphate 3-phosphatidyltransferase (236 aa).

The next 5 helical transmembrane spans lie at 39–59 (IFIA…GVLA), 66–86 (ISIS…TAVI), 120–140 (VLIA…VFIV), 163–183 (WLGK…CFVW), and 196–216 (GLFF…FSIW).

The protein belongs to the CDP-alcohol phosphatidyltransferase class-I family.

The protein localises to the cell membrane. The enzyme catalyses a CDP-1,2-diacyl-sn-glycerol + sn-glycerol 3-phosphate = a 1,2-diacyl-sn-glycero-3-phospho-(1'-sn-glycero-3'-phosphate) + CMP + H(+). The protein operates within phospholipid metabolism; phosphatidylglycerol biosynthesis; phosphatidylglycerol from CDP-diacylglycerol: step 1/2. This protein catalyzes the committed step to the synthesis of the acidic phospholipids. The protein is CDP-diacylglycerol--glycerol-3-phosphate 3-phosphatidyltransferase (pgsA) of Mycoplasma genitalium (strain ATCC 33530 / DSM 19775 / NCTC 10195 / G37) (Mycoplasmoides genitalium).